A 54-amino-acid polypeptide reads, in one-letter code: Putative neurotoxin-I (54 aa).

Cystine bridges form between Cys20/Cys42, Cys28/Cys51, and Cys32/Cys53.

Expressed by the venom gland.

The protein localises to the secreted. The protein is Putative neurotoxin-I of Lychas mucronatus (Chinese swimming scorpion).